A 237-amino-acid polypeptide reads, in one-letter code: Class B acid phosphatase (237 aa).

The N-terminal stretch at 1–25 (MRKVSLALSAACLLFTLNYTASALA) is a signal peptide. The active-site Nucleophile is aspartate 69. Residues aspartate 69 and aspartate 71 each contribute to the Mg(2+) site. Catalysis depends on aspartate 71, which acts as the Proton donor. Substrate-binding positions include 137–138 (TG) and lysine 177. Aspartate 192 serves as a coordination point for Mg(2+).

Belongs to the class B bacterial acid phosphatase family. In terms of assembly, homotetramer. Mg(2+) is required as a cofactor.

Its subcellular location is the periplasm. The catalysed reaction is a phosphate monoester + H2O = an alcohol + phosphate. In terms of biological role, dephosphorylates several organic phosphate monoesters. Also has a phosphotransferase activity catalyzing the transfer of low-energy phosphate groups from organic phosphate monoesters to free hydroxyl groups of various organic compounds. The sequence is that of Class B acid phosphatase from Citrobacter rodentium (strain ICC168) (Citrobacter freundii biotype 4280).